The chain runs to 105 residues: SH3 domain-binding glutamic acid-rich-like protein 2 (105 aa).

Residues 61 to 67 (KGNPLPP) carry the SH3-binding motif.

Belongs to the SH3BGR family.

Its subcellular location is the nucleus. This chain is SH3 domain-binding glutamic acid-rich-like protein 2 (sh3bgrl2), found in Danio rerio (Zebrafish).